The following is a 256-amino-acid chain: MYPTKFRRGVSYSQRRFVSRNQSSKRGTFVRRTDGKRRKGPSSKAHDEPKMKLQRIHENQYGPEFVMTHNSALSTFINFPVLGKIEPNRSRSYIKLNRLSFKGTVKIERVHADVNMDGVISKIEGVFSLVIVVDRKPHLSSTGGLHTFDEIFGARIHSHGNLAITPGLKDRYYVLHVLKRVLSVEKDTLMVDLEGSTTISNRRYNCWASFNDLEHDLCNGVYANISKNAILVYYCWMSDAMSKASTFVSYDLDYLG.

A disordered region spans residues 18-50 (VSRNQSSKRGTFVRRTDGKRRKGPSSKAHDEPK). A Bipartite nuclear localization signal motif is present at residues 21–42 (NQSSKRGTFVRRTDGKRRKGPS). Residues 81–96 (VLGKIEPNRSRSYIKL) carry the Nuclear localization signal motif. Residues 150-187 (EIFGARIHSHGNLAITPGLKDRYYVLHVLKRVLSVEKD) are interaction with Arabidopsis thaliana NSI protein.

The protein belongs to the begomovirus nuclear shuttle protein family. Binds to single-stranded and double-stranded viral DNA. Interacts with the host nuclear shuttle interacting (NSI) protein. This interaction may allow NSP to recruit NSI monomers to the viral genome and thus regulate nuclear export of viral genome by NSP.

It localises to the host nucleus. The protein resides in the host cytoplasm. It is found in the host cell membrane. Functionally, binds to the genomic viral ssDNA, shuttles it into and out of the cell nucleus. Begomoviruses use 2 proteins to transport their DNA from cell to cell. The nuclear shuttle protein (NSP) shuttles it between nucleus and cytoplasm and the movement protein (MP) probably transports the DNA-NSP complex to the cell periphery and facilitates movement across the cell wall. In Brassica oleracea (Wild cabbage), this protein is Nuclear shuttle protein.